Consider the following 178-residue polypeptide: Long polar fimbria protein A (178 aa).

Positions 1-24 (MEFLMKKVVFALSALAVVSTSAFA) are cleaved as a signal peptide.

The protein belongs to the fimbrial protein family.

The protein resides in the fimbrium. This is Long polar fimbria protein A (lpfA) from Salmonella typhimurium (strain LT2 / SGSC1412 / ATCC 700720).